The following is a 152-amino-acid chain: Protein X (152 aa).

Residues 68–115 (PCALRFTSATWRCMETPMNSVTCLRKRTLGLRTAPPTVMEQYIKDCLF) form a mitochondrial targeting sequence region.

It belongs to the orthohepadnavirus protein X family. In terms of assembly, may form homodimer. May interact with host CEBPA, CFLAR, CREB1, DDB1, E4F1, HBXIP, HSPD1/HSP60, NFKBIA, POLR2E and SMAD4. Interacts with host SMC5-SMC6 complex and induces its degradation. Interacts with host TRPC4AP; leading to prevent ubiquitination of TRPC4AP. Interacts with host PLSCR1; this interaction promotes ubiquitination and degradation of HBx and impairs HBx-mediated cell proliferation. A fraction may be phosphorylated in insect cells and HepG2 cells, a human hepatoblastoma cell line. Phosphorylated in vitro by host protein kinase C or mitogen-activated protein kinase. N-acetylated in insect cells.

The protein resides in the host cytoplasm. It is found in the host nucleus. The protein localises to the host mitochondrion. Its function is as follows. Multifunctional protein that plays a role in silencing host antiviral defenses and promoting viral transcription. Does not seem to be essential for HBV infection. May be directly involved in development of cirrhosis and liver cancer (hepatocellular carcinoma). Most of cytosolic activities involve modulation of cytosolic calcium. The effect on apoptosis is controversial depending on the cell types in which the studies have been conducted. May induce apoptosis by localizing in mitochondria and causing loss of mitochondrial membrane potential. May also modulate apoptosis by binding host CFLAR, a key regulator of the death-inducing signaling complex (DISC). Promotes viral transcription by using the host E3 ubiquitin ligase DDB1 to target the SMC5-SMC6 complex to proteasomal degradation. This host complex would otherwise bind to viral episomal DNA, and prevents its transcription. Moderately stimulates transcription of many different viral and cellular transcription elements. Promoters and enhancers stimulated by HBx contain DNA binding sites for NF-kappa-B, AP-1, AP-2, c-EBP, ATF/CREB, or the calcium-activated factor NF-AT. The protein is Protein X of Lagothrix lagotricha (Brown woolly monkey).